The chain runs to 83 residues: Arminin 3b (83 aa).

The signal sequence occupies residues 1 to 18 (MKIVFAILFLTFIALTYA). The propeptide occupies 19–57 (RSFEDLKEEIKNEIEKEIFDDLEEESDELDNNVKKFNDA). Position 80 is a serine amide (Ser-80).

It belongs to the arminin family. In terms of tissue distribution, expressed in entodermal epithelium along the body column.

The protein resides in the secreted. Its subcellular location is the target cell membrane. In terms of biological role, antimicrobial peptide with a broad-spectrum antimicrobial activity. Keeps its antibacterial activity under a wide range of salt concentrations that mimic physiological conditions of human blood, which is surprising, since Hydra is an obligate freshwater animal with nearly no salt tolerance. Does not affect red blood cells. This chain is Arminin 3b, found in Hydra vulgaris (Hydra).